The chain runs to 237 residues: Orotidine 5'-phosphate decarboxylase (237 aa).

Substrate-binding positions include aspartate 11, lysine 34, 61–70, threonine 124, arginine 186, glutamine 195, glycine 215, and arginine 216; that span reads DLKLHDIPNT. Lysine 63 serves as the catalytic Proton donor.

It belongs to the OMP decarboxylase family. Type 1 subfamily. Homodimer.

The enzyme catalyses orotidine 5'-phosphate + H(+) = UMP + CO2. It participates in pyrimidine metabolism; UMP biosynthesis via de novo pathway; UMP from orotate: step 2/2. In terms of biological role, catalyzes the decarboxylation of orotidine 5'-monophosphate (OMP) to uridine 5'-monophosphate (UMP). The protein is Orotidine 5'-phosphate decarboxylase of Lactococcus lactis subsp. lactis (strain IL1403) (Streptococcus lactis).